The following is a 270-amino-acid chain: MLLASVPQLDRVAIQLGPFPVYWYGIIIGTGVLLGLWLATREGERLGIPKDTFVDLVLIAVPIAILFARMYYVIFEWEYYAQNPSQIINIRQGGLAIHGGLIGAVITGVLFAKRRGLSFWKLADIAAPSILLGQAIGRWGNFMNQEAHGDEVTRQFLEGLHLPDFIINQMYIEGVYYHPTFLYESLWNFAGVILLLALRKVNLRRGELFFTYLIWYSVGRFFVEGLRTDSLMLGPLRIAQVMSIGLVVISIIFIIVRRKMGQADKRYLEN.

4 consecutive transmembrane segments (helical) span residues 19–39 (FPVY…LWLA), 56–76 (LVLI…VIFE), 92–112 (QGGL…VLFA), and 116–136 (GLSF…GQAI). R138 is an a 1,2-diacyl-sn-glycero-3-phospho-(1'-sn-glycerol) binding site. 3 helical membrane-spanning segments follow: residues 178 to 198 (HPTF…LLAL), 206 to 226 (GELF…VEGL), and 236 to 256 (LRIA…FIIV).

This sequence belongs to the Lgt family.

Its subcellular location is the cell membrane. It catalyses the reaction L-cysteinyl-[prolipoprotein] + a 1,2-diacyl-sn-glycero-3-phospho-(1'-sn-glycerol) = an S-1,2-diacyl-sn-glyceryl-L-cysteinyl-[prolipoprotein] + sn-glycerol 1-phosphate + H(+). The protein operates within protein modification; lipoprotein biosynthesis (diacylglyceryl transfer). In terms of biological role, catalyzes the transfer of the diacylglyceryl group from phosphatidylglycerol to the sulfhydryl group of the N-terminal cysteine of a prolipoprotein, the first step in the formation of mature lipoproteins. The polypeptide is Phosphatidylglycerol--prolipoprotein diacylglyceryl transferase (Bacillus cereus (strain ATCC 14579 / DSM 31 / CCUG 7414 / JCM 2152 / NBRC 15305 / NCIMB 9373 / NCTC 2599 / NRRL B-3711)).